The sequence spans 144 residues: Large ribosomal subunit protein uL16 (144 aa).

Belongs to the universal ribosomal protein uL16 family. As to quaternary structure, part of the 50S ribosomal subunit.

Functionally, binds 23S rRNA and is also seen to make contacts with the A and possibly P site tRNAs. In Heliobacterium modesticaldum (strain ATCC 51547 / Ice1), this protein is Large ribosomal subunit protein uL16.